A 359-amino-acid polypeptide reads, in one-letter code: Very-long-chain (3R)-3-hydroxyacyl-CoA dehydratase (359 aa).

At 1–144 (MSALTPHVYW…RKDPFLGLKK (144 aa)) the chain is on the cytoplasmic side. The CS domain maps to 3-92 (ALTPHVYWAQ…QEEVWWNRLT (90 aa)). The stretch at 109 to 133 (LDESDAEMELREKEEKINKVSFESR) forms a coiled coil. Residues 145-165 (GFLFMYNLVQFLGYSWIFVNM) traverse the membrane as a helical segment. Topologically, residues 166-186 (TVRLFILGQDSFYDTFHTIAD) are lumenal. A helical transmembrane segment spans residues 187–207 (VMYFCQMLAIMEVINPAVGLV). Residues 208-209 (KT) lie on the Cytoplasmic side of the membrane. A helical membrane pass occupies residues 210 to 230 (GVMPAFIQVMGRNFILFVIFG). The Lumenal segment spans residues 231-239 (SLEDMQNKP). Residues 240 to 260 (VVFFVFYLWSTIEIFRYPFYM) form a helical membrane-spanning segment. Topologically, residues 261–277 (LACIDTEWKLLTWLRYT) are cytoplasmic. Residues 278-298 (IWMPLYPLGVLAEAVAVIQSI) form a helical membrane-spanning segment. Active-site residues include Y283 and E290. Topologically, residues 299-317 (PIFDETKLLSIPLPKATGL) are lumenal. A helical membrane pass occupies residues 318 to 338 (SLSFSYILQLYLVVMFLGLFI). Residues 339-359 (NFRHLFKQRTRRFRTKKRKAN) are Cytoplasmic-facing.

It belongs to the very long-chain fatty acids dehydratase HACD family.

It localises to the endoplasmic reticulum membrane. The catalysed reaction is a very-long-chain (3R)-3-hydroxyacyl-CoA = a very-long-chain (2E)-enoyl-CoA + H2O. It catalyses the reaction (3R)-hydroxyhexadecanoyl-CoA = (2E)-hexadecenoyl-CoA + H2O. It participates in lipid metabolism; fatty acid biosynthesis. In terms of biological role, catalyzes the third of the four reactions of the long-chain fatty acids elongation cycle. This endoplasmic reticulum-bound enzymatic process, allows the addition of two carbons to the chain of long- and very long-chain fatty acids/VLCFAs per cycle. This enzyme catalyzes the dehydration of the 3-hydroxyacyl-CoA intermediate into trans-2,3-enoyl-CoA, within each cycle of fatty acid elongation. Thereby, it participates in the production of VLCFAs of different chain lengths that are involved in multiple biological processes as precursors of membrane lipids and lipid mediators. Involved in Rac1-signaling pathways leading to the modulation of gene expression. The protein is Very-long-chain (3R)-3-hydroxyacyl-CoA dehydratase of Danio rerio (Zebrafish).